The primary structure comprises 748 residues: Formate acetyltransferase (748 aa).

Residues 5-618 (NNHTNAWQGF…KTGNTPDGRK (614 aa)) enclose the PFL domain. The active-site S-acetylcysteine intermediate is Cys-412. Cys-413 functions as the Cysteine radical intermediate in the catalytic mechanism. Positions 625–748 (PGANPMHGRD…VISRTFHESM (124 aa)) constitute a Glycine radical domain. Gly-723 carries the glycine radical modification.

Belongs to the glycyl radical enzyme (GRE) family. PFL subfamily. Homodimer.

Its subcellular location is the cytoplasm. The catalysed reaction is formate + acetyl-CoA = pyruvate + CoA. It participates in fermentation; pyruvate fermentation; formate from pyruvate: step 1/1. In terms of biological role, catalyzes the conversion of pyruvate to formate and acetyl-CoA. In Staphylococcus epidermidis (strain ATCC 12228 / FDA PCI 1200), this protein is Formate acetyltransferase (pflB).